Reading from the N-terminus, the 110-residue chain is Phosphoribosyl-ATP pyrophosphatase (110 aa).

The protein belongs to the PRA-PH family.

It localises to the cytoplasm. It carries out the reaction 1-(5-phospho-beta-D-ribosyl)-ATP + H2O = 1-(5-phospho-beta-D-ribosyl)-5'-AMP + diphosphate + H(+). It participates in amino-acid biosynthesis; L-histidine biosynthesis; L-histidine from 5-phospho-alpha-D-ribose 1-diphosphate: step 2/9. This chain is Phosphoribosyl-ATP pyrophosphatase, found in Pseudomonas fluorescens (strain ATCC BAA-477 / NRRL B-23932 / Pf-5).